The chain runs to 195 residues: Meiotically up-regulated gene 84 protein (195 aa).

The Cytoplasmic portion of the chain corresponds to 1–84 (MTLTHHSTFI…IMVKVPTYEY (84 aa)). Residues 85–105 (YGFVMYLVSMLGFGVYIVWAL) traverse the membrane as a helical segment. The Lumenal portion of the chain corresponds to 106–122 (TPAPVLKFFEIHYYLSR). The chain crosses the membrane as a helical span at residues 123 to 143 (WWALAIPTWLFVLVIYIHVVL). Residues 144–195 (NAYNTEVLTKPFSSLECIVDQYALVGEEDGAAHGRVVDLRLCDVNKQQLEET) lie on the Cytoplasmic side of the membrane.

It localises to the endoplasmic reticulum membrane. Functionally, has a role in meiosis. In Schizosaccharomyces pombe (strain 972 / ATCC 24843) (Fission yeast), this protein is Meiotically up-regulated gene 84 protein (mug84).